Reading from the N-terminus, the 652-residue chain is Forkhead box protein O1-A (652 aa).

Disordered regions lie at residues 1–57 (MADA…EPSS), 208–277 (SSWW…NSHS), and 359–406 (NLLS…QQTQ). Residues 41–57 (DSNTSSPAPSVKQEPSS) show a composition bias toward polar residues. Positions 134–228 (WGNMSYADLI…KSGKSPRRRA (95 aa)) form a DNA-binding region, fork-head. The segment covering 238–249 (AKSRGRAAKKKL) has biased composition (basic residues). Over residues 362–397 (SPKNPSTGGPGSGSNQSSPSSLMQASPGYSPYSSPG) the composition is skewed to low complexity.

Its subcellular location is the cytoplasm. It localises to the nucleus. Functionally, transcription factor that regulates metabolic homeostasis in response to oxidative stress. Binds to the consensus sequence 5'-TT[G/A]TTTTG-3' and the related Daf-16 family binding element (DBE) with consensus sequence 5'-TT[G/A]TTTAC-3'. Main regulator of redox balance and osteoblast numbers and controls bone mass. Orchestrates the endocrine function of the skeleton in regulating glucose metabolism. May be involved in regulating cellular homeostasis in the eye. May act as a positive regulator of apoptosis in cardiac smooth muscle cells as a result of its transcriptional activation of pro-apoptotic genes. The sequence is that of Forkhead box protein O1-A (foxo1a) from Danio rerio (Zebrafish).